Consider the following 234-residue polypeptide: Pepsin inhibitor Dit33 (234 aa).

Positions Met-1–Ala-17 are cleaved as a signal peptide. Cys-135 and Cys-230 are joined by a disulfide. The tract at residues Arg-200–Glu-222 is disordered. The segment covering Ser-204 to Ala-219 has biased composition (polar residues).

The protein belongs to the protease inhibitor I33 family.

It is found in the secreted. Aspartyl protease inhibitor. The polypeptide is Pepsin inhibitor Dit33 (DIT33) (Dirofilaria immitis (Canine heartworm)).